Reading from the N-terminus, the 545-residue chain is Membrane protein insertase YidC (545 aa).

4 helical membrane passes run 350 to 370 (IIGN…AVLY), 424 to 444 (LPML…FASV), 461 to 481 (ADPY…QTYL), and 498 to 518 (PLVF…YWVI).

Belongs to the OXA1/ALB3/YidC family. Type 1 subfamily. In terms of assembly, interacts with the Sec translocase complex via SecD. Specifically interacts with transmembrane segments of nascent integral membrane proteins during membrane integration.

It localises to the cell inner membrane. In terms of biological role, required for the insertion and/or proper folding and/or complex formation of integral membrane proteins into the membrane. Involved in integration of membrane proteins that insert both dependently and independently of the Sec translocase complex, as well as at least some lipoproteins. Aids folding of multispanning membrane proteins. The chain is Membrane protein insertase YidC from Neisseria meningitidis serogroup A / serotype 4A (strain DSM 15465 / Z2491).